A 793-amino-acid chain; its full sequence is MASRNQNRPPRSPNAKKEGLGGISFDKRRKVETQGGTGRRQAFSAVNKQDVTMNSDVGSIEECGKVDFTKDEILALLSERAKAGKFDTKAKIEQMTDIIKRLKVCVKWFQQADETHVQEKENLKVSLESSEQKYNHKELEARTKEEELQATISKLEENVVSLHEKLAKEESSTQDAIECHRREKEARVAAEKVQASLGEELDKVKEEKMAAKQKVTSLEDMYKRLQEYNTSLQQYNSKLQTDLETVRAALTRAEKEKSSILENLSTLRGHSKSLQDQLSSSRVLQDDAIKQKDSLLSEVTNLRNELQQVRDDRDRQVVQSQKLSEEIRKYQENVGKSSQELDILTAKSGSLEETCSLQKERLNMLEQQLAIANERQKMADASVSLTRTEFEEQKHLLCELQDRLADMEHQLCEGELLRKKLHNTILELKGNIRVFCRVRPLLPDDGGRHEATVIAYPTSTEAQGRGVDLVQSGNKHPFTFDKVFNHEASQEEVFFEISQLVQSALDGYKVCIFAYGQTGSGKTYTMMGRPEAPDQKGLIPRSLEQIFQASQSLGAQGWKYKMQVSMLEIYNETIRDLLSTNRTTSMDLVRADSGTSGKQYTITHDVNGHTHVSDLTIFDVCSVGKISSLLQQAAQSRSVGKTQMNEQSSRSHFVFTMRISGVNESTEQQVQGVLNLIDLAGSERLSKSGATGDRLKETQAINKSLSALSDVIFALAKKEDHVPFRNSKLTYLLQPCLGGDSKTLMFVNISPDPTSAGESLCSLRFAARVNACEIGIPRRQTSTKLLDSRLSYG.

The tract at residues 1 to 43 (MASRNQNRPPRSPNAKKEGLGGISFDKRRKVETQGGTGRRQAF) is disordered. The tract at residues 1 to 69 (MASRNQNRPP…IEECGKVDFT (69 aa)) is globular. The segment covering 15-32 (AKKEGLGGISFDKRRKVE) has biased composition (basic and acidic residues). Residues 120-375 (KENLKVSLES…EQQLAIANER (256 aa)) are a coiled coil. One can recognise a Kinesin motor domain in the interval 431–772 (NIRVFCRVRP…LRFAARVNAC (342 aa)). 516–523 (GQTGSGKT) contacts ATP.

Belongs to the TRAFAC class myosin-kinesin ATPase superfamily. Kinesin family. KIN-14 subfamily.

Its subcellular location is the cytoplasm. It localises to the cytoskeleton. It is found in the spindle. The protein localises to the phragmoplast. The protein resides in the chromosome. Its subcellular location is the centromere. It localises to the kinetochore. Functionally, kinesin that supports microtubule movement in an ATP-dependent manner and has a minus-end directed polarity. Plays a crucial role in spindle morphogenesis in male meiosis. In mitosis, is required for normal microtubule accumulation at the spindle poles during prophase and may play a role in spindle assembly during prometaphase. The sequence is that of Kinesin-like protein KIN-14C from Arabidopsis thaliana (Mouse-ear cress).